The sequence spans 319 residues: Exopolyphosphatase 2 (319 aa).

This sequence belongs to the GppA/Ppx family. As to quaternary structure, homodimer.

It catalyses the reaction [phosphate](n) + H2O = [phosphate](n-1) + phosphate + H(+). Its activity is regulated as follows. Exopolyphosphatase activity is inhibited by ppGpp alarmones produced during the bacterial stringent response. Its function is as follows. Degradation of inorganic polyphosphates (polyP). Releases orthophosphate processively from the ends of the polyP chain. Prefers long-chain length polyphosphates as substrates. The protein is Exopolyphosphatase 2 of Mycobacterium tuberculosis (strain CDC 1551 / Oshkosh).